The chain runs to 423 residues: ATP-citrate synthase alpha chain protein 2 (423 aa).

The citrate site is built by asparagine 343, threonine 345, and arginine 376.

The protein belongs to the succinate/malate CoA ligase beta subunit family. As to quaternary structure, heterooctamer of 4 alpha and 4 beta chains.

The protein localises to the cytoplasm. The protein resides in the cytosol. The enzyme catalyses oxaloacetate + acetyl-CoA + ADP + phosphate = citrate + ATP + CoA. ATP citrate-lyase is the primary enzyme responsible for the synthesis of cytosolic acetyl-CoA, used for the elongation of fatty acids and biosynthesis of isoprenoids, flavonoids and malonated derivatives. May supply substrate to the cytosolic acetyl-CoA carboxylase, which generates the malonyl-CoA used for the synthesis of a multitude of compounds, including very long chain fatty acids and flavonoids. In contrast to all known animal ACL enzymes having a homomeric structure, plant ACLs are composed of alpha and beta chains. The polypeptide is ATP-citrate synthase alpha chain protein 2 (ACLA-2) (Oryza sativa subsp. japonica (Rice)).